Here is a 195-residue protein sequence, read N- to C-terminus: Imidazoleglycerol-phosphate dehydratase (195 aa).

Belongs to the imidazoleglycerol-phosphate dehydratase family.

Its subcellular location is the cytoplasm. It carries out the reaction D-erythro-1-(imidazol-4-yl)glycerol 3-phosphate = 3-(imidazol-4-yl)-2-oxopropyl phosphate + H2O. The protein operates within amino-acid biosynthesis; L-histidine biosynthesis; L-histidine from 5-phospho-alpha-D-ribose 1-diphosphate: step 6/9. In Bordetella petrii (strain ATCC BAA-461 / DSM 12804 / CCUG 43448), this protein is Imidazoleglycerol-phosphate dehydratase.